Reading from the N-terminus, the 281-residue chain is sn-glycerol-3-phosphate transport system permease protein UgpE (281 aa).

6 helical membrane passes run 14–34 (VMLI…FVAA), 82–104 (VMAF…AIVY), 113–133 (FFWL…FPTI), 142–162 (LDSY…TFLF), 188–210 (FWDI…TFIY), and 247–267 (WNQV…VVLL). Positions 77–268 (LFNSFVMAFA…IPPVAVVLLM (192 aa)) constitute an ABC transmembrane type-1 domain.

The protein belongs to the binding-protein-dependent transport system permease family. UgpAE subfamily. As to quaternary structure, the complex is composed of two ATP-binding proteins (UgpC), two transmembrane proteins (UgpA and UgpE) and a solute-binding protein (UgpB).

It is found in the cell inner membrane. Its function is as follows. Part of the ABC transporter complex UgpBAEC involved in sn-glycerol-3-phosphate (G3P) import. Probably responsible for the translocation of the substrate across the membrane. In Yersinia enterocolitica serotype O:8 / biotype 1B (strain NCTC 13174 / 8081), this protein is sn-glycerol-3-phosphate transport system permease protein UgpE (ugpE).